Here is a 573-residue protein sequence, read N- to C-terminus: MKASQFFISTLKEAPADAEIVSHKLMMRAGMIKKLGAGIYNYMPIGLRVIRKVENIVREEMNRAGAVELSMPVIQPAELWQETGRWDKMGPELLRLKDRHERDFAVQPTSEEVVTDIARSEIRSYKQLPVNFYQIQTKFRDERRPRFGIMRGREFTMKDAYSFDRDTDGLRKSYENMYDAYVRIFRRFGLEFRAVAADNGAIGGSGSHEFHVIAETGEDAIVYCPTSAYAANMEAAEALPLVAERAAPTQDLVKTFTPEKVKCEQVAEFLNIPLETNVKSIVLATDSDAGPQIWLLLIRADHELNEVKASKVPGLAEFRFATENEIVEAFGSPPGYLGPIDMKKPVKVVADRTVANMSDFVCGANYRDYHYTGVNWGRDLPEPIVADLRNVVAGDASPDGQGTLEICRGIEVGHVFMLGTRYSESMNATFLDENGKTQPMQMGCYGIGITRILGAAIEQNFDERGIIWPAAIAPFAVVICPVGYDRSEAVKAEADRIHAELLAAGVDVILDDRGERPGVMFADWELIGVPHRVVVGDRGLKEGKVEYQGRRDAQATAVSVAEVVGHVRSLLAN.

Belongs to the class-II aminoacyl-tRNA synthetase family. ProS type 1 subfamily. As to quaternary structure, homodimer.

Its subcellular location is the cytoplasm. The catalysed reaction is tRNA(Pro) + L-proline + ATP = L-prolyl-tRNA(Pro) + AMP + diphosphate. In terms of biological role, catalyzes the attachment of proline to tRNA(Pro) in a two-step reaction: proline is first activated by ATP to form Pro-AMP and then transferred to the acceptor end of tRNA(Pro). As ProRS can inadvertently accommodate and process non-cognate amino acids such as alanine and cysteine, to avoid such errors it has two additional distinct editing activities against alanine. One activity is designated as 'pretransfer' editing and involves the tRNA(Pro)-independent hydrolysis of activated Ala-AMP. The other activity is designated 'posttransfer' editing and involves deacylation of mischarged Ala-tRNA(Pro). The misacylated Cys-tRNA(Pro) is not edited by ProRS. This chain is Proline--tRNA ligase, found in Cupriavidus taiwanensis (strain DSM 17343 / BCRC 17206 / CCUG 44338 / CIP 107171 / LMG 19424 / R1) (Ralstonia taiwanensis (strain LMG 19424)).